The primary structure comprises 382 residues: Probable G-protein coupled receptor 132 (382 aa).

At 1 to 42 (MRSEPTNAAGNTTLGVTSVLQSTSVPSSETCHVSYEESRVVL) the chain is on the extracellular side. The N-linked (GlcNAc...) asparagine glycan is linked to N11. Residues 43 to 65 (VVVYSAVCLLGLPANCLTAWLTL) form a helical membrane-spanning segment. Over 66 to 76 (LQVLQRNVLAV) the chain is Cytoplasmic. A helical membrane pass occupies residues 77–99 (YLFCLSLCELLYISTVPLWIIYI). At 100 to 113 (QNQHKWNLGPQACK) the chain is on the extracellular side. C112 and C184 are oxidised to a cystine. The helical transmembrane segment at 114–135 (VTAYIFFCNIYISILLLCCISC) threads the bilayer. Residues 136–155 (DRYMAVVYALESRGHRHQRT) are Cytoplasmic-facing. Residues 156 to 175 (AVTISACVILLVGLVNYPVF) traverse the membrane as a helical segment. Topologically, residues 176–198 (DMKVEKSFCFEPLRMNSKIAGYH) are extracellular. The chain crosses the membrane as a helical span at residues 199-221 (YLRFTFGFAIPLGILAFTNHQIF). Residues 222–241 (RSIKLSDSLSAAQKNKVKRS) lie on the Cytoplasmic side of the membrane. The chain crosses the membrane as a helical span at residues 242–261 (AIAVVTIFLVCFAPYHVVLL). The Extracellular segment spans residues 262–286 (VKAASFSFYQGDMDAVCAFESRLYT). A helical transmembrane segment spans residues 287 to 309 (VSMVFLCLSTVNSVADPIIYVLG). Residues 310 to 382 (TDHSRQEVSR…SPERLPEELC (73 aa)) are Cytoplasmic-facing.

The protein belongs to the G-protein coupled receptor 1 family. As to expression, highly expressed in hematopoietic tissues rich in lymphocytes like spleen and thymus. Weakly expressed in heart and lung. Highly expressed in infiltrating macrophages within atherosclerotic lesions.

The protein localises to the cell membrane. Functionally, may be a receptor for oxidized free fatty acids derived from linoleic and arachidonic acids such as 9-hydroxyoctadecadienoic acid (9-HODE). Activates a G alpha protein, most likely G alpha(q). May be involved in apoptosis. Functions at the G2/M checkpoint to delay mitosis. May function as a sensor that monitors the oxidative states and mediates appropriate cellular responses such as secretion of paracrine signals and attenuation of proliferation. May mediate ths accumulation of intracellular inositol phosphates at acidic pH through proton-sensing activity. The polypeptide is Probable G-protein coupled receptor 132 (Gpr132) (Mus musculus (Mouse)).